A 485-amino-acid chain; its full sequence is dTDP-4-amino-4,6-dideoxy-D-glucose ammonia-lyase (485 aa).

3 residues coordinate [4Fe-4S] cluster: Cys141, Cys145, and Cys148.

The protein belongs to the radical SAM superfamily. DesII family. In terms of assembly, monomer. Requires [4Fe-4S] cluster as cofactor.

It carries out the reaction dTDP-4-amino-4,6-dideoxy-alpha-D-glucose + AH2 + S-adenosyl-L-methionine = dTDP-3-dehydro-4,6-dideoxy-alpha-D-glucose + 5'-deoxyadenosine + L-methionine + A + NH4(+) + H(+). Involved in the biosynthesis of dTDP-alpha-D-desosamine, a sugar found in several bacterial macrolide antibiotics. Catalyzes the SAM-dependent deamination of dTDP-4-amino-4,6-deoxyglucose (dTDP-viosamine) to yield dTDP-3-keto-4,6-deoxyglucose. It can also catalyze the oxidative dehydrogenation of the non-physiological substrate dTDP-D-quinovose to dTDP-3-keto-6-deoxy-d-glucose. It can also deaminate dTDP-3-amino-3,6-deoxyglucose. The polypeptide is dTDP-4-amino-4,6-dideoxy-D-glucose ammonia-lyase (Streptomyces venezuelae).